We begin with the raw amino-acid sequence, 230 residues long: 5'-methylthioadenosine/S-adenosylhomocysteine nucleosidase (230 aa).

Residue Glu12 is the Proton acceptor of the active site. Substrate-binding positions include Gly78, Ile153, and 174 to 175 (ME). The Proton donor role is filled by Asp198.

This sequence belongs to the PNP/UDP phosphorylase family. MtnN subfamily.

It catalyses the reaction S-adenosyl-L-homocysteine + H2O = S-(5-deoxy-D-ribos-5-yl)-L-homocysteine + adenine. It carries out the reaction S-methyl-5'-thioadenosine + H2O = 5-(methylsulfanyl)-D-ribose + adenine. The catalysed reaction is 5'-deoxyadenosine + H2O = 5-deoxy-D-ribose + adenine. It functions in the pathway amino-acid biosynthesis; L-methionine biosynthesis via salvage pathway; S-methyl-5-thio-alpha-D-ribose 1-phosphate from S-methyl-5'-thioadenosine (hydrolase route): step 1/2. Functionally, catalyzes the irreversible cleavage of the glycosidic bond in both 5'-methylthioadenosine (MTA) and S-adenosylhomocysteine (SAH/AdoHcy) to adenine and the corresponding thioribose, 5'-methylthioribose and S-ribosylhomocysteine, respectively. Also cleaves 5'-deoxyadenosine, a toxic by-product of radical S-adenosylmethionine (SAM) enzymes, into 5-deoxyribose and adenine. The polypeptide is 5'-methylthioadenosine/S-adenosylhomocysteine nucleosidase (Shewanella pealeana (strain ATCC 700345 / ANG-SQ1)).